The sequence spans 204 residues: MDAIVKNFPVLDDTGRPTQKEAEEAVRVLLRWAGEDPAREGLKDTPSRVAKAYREIFGGYDLVAEDVLGRTFEEVSGYDDIVLEKDIPFYSHCEHHMVPIIGKAHIAYLPNGRVLGLSKIARVVDIYARRLQTQEAMTAQIAKAIDETLMPRGVAVMIEAEHLCMAMRGIKKQGATTLTTTFTGAFKSEPAEQVRFMTMLRGFK.

Positions 93, 96, and 164 each coordinate Zn(2+).

This sequence belongs to the GTP cyclohydrolase I family. Toroid-shaped homodecamer, composed of two pentamers of five dimers.

It carries out the reaction GTP + H2O = 7,8-dihydroneopterin 3'-triphosphate + formate + H(+). Its pathway is cofactor biosynthesis; 7,8-dihydroneopterin triphosphate biosynthesis; 7,8-dihydroneopterin triphosphate from GTP: step 1/1. This is GTP cyclohydrolase 1 from Rhizobium meliloti (strain 1021) (Ensifer meliloti).